The following is an 840-amino-acid chain: Phosphatidylinositol-glycan-specific phospholipase D (840 aa).

Positions 1–23 (MSAFRLWPGLLIMLGSLCHRGSP) are cleaved as a signal peptide. N-linked (GlcNAc...) asparagine glycans are attached at residues N94, N271, N292, N307, and N321. FG-GAP repeat units follow at residues 367 to 428 (SPLA…GLPP), 436 to 497 (EAHR…GGMS), 499 to 559 (SPNI…LSDK), 563 to 623 (NVEA…SLGR), 633 to 693 (QSWF…GATR), 704 to 770 (LLLS…TLGD), and 788 to 840 (QYVL…LGSD). Residues N501, N568, N591, N604, and N659 are each glycosylated (N-linked (GlcNAc...) asparagine).

It belongs to the GPLD1 family. As to quaternary structure, monomer.

The protein localises to the secreted. The catalysed reaction is a 6-(alpha-D-glucosaminyl)-1-(1,2-diacyl-sn-glycero-3-phospho)-1D-myo-inositol + H2O = 6-(alpha-D-glucosaminyl)-1D-myo-inositol + a 1,2-diacyl-sn-glycero-3-phosphate + H(+). In terms of biological role, this protein hydrolyzes the inositol phosphate linkage in proteins anchored by phosphatidylinositol glycans (GPI-anchor) thus releasing these proteins from the membrane. The polypeptide is Phosphatidylinositol-glycan-specific phospholipase D (GPLD1) (Homo sapiens (Human)).